The chain runs to 581 residues: Membrane protein insertase YidC (581 aa).

The helical transmembrane segment at 7 to 27 (ILIVALAVVSYLMVLQWNEDY) threads the bilayer. Residues 41–62 (AATPALPDTPADTASTGGDDIP) form a disordered region. 5 helical membrane-spanning segments follow: residues 365 to 385 (TVDY…LEVI), 388 to 408 (LLGN…LIFF), 458 to 478 (LGGC…YWVL), 489 to 509 (WMFW…PIIM), and 536 to 556 (PIIF…YWVV).

Belongs to the OXA1/ALB3/YidC family. Type 1 subfamily. As to quaternary structure, interacts with the Sec translocase complex via SecD. Specifically interacts with transmembrane segments of nascent integral membrane proteins during membrane integration.

Its subcellular location is the cell inner membrane. Its function is as follows. Required for the insertion and/or proper folding and/or complex formation of integral membrane proteins into the membrane. Involved in integration of membrane proteins that insert both dependently and independently of the Sec translocase complex, as well as at least some lipoproteins. Aids folding of multispanning membrane proteins. The protein is Membrane protein insertase YidC of Ectopseudomonas mendocina (strain ymp) (Pseudomonas mendocina).